The chain runs to 217 residues: Cytidylate kinase (217 aa).

10–18 (GPAGAGKST) is an ATP binding site.

The protein belongs to the cytidylate kinase family. Type 1 subfamily.

It localises to the cytoplasm. The enzyme catalyses CMP + ATP = CDP + ADP. The catalysed reaction is dCMP + ATP = dCDP + ADP. The chain is Cytidylate kinase from Alkaliphilus oremlandii (strain OhILAs) (Clostridium oremlandii (strain OhILAs)).